A 206-amino-acid chain; its full sequence is Small ribosomal subunit protein uS4 (206 aa).

One can recognise an S4 RNA-binding domain in the interval 96–157 (RRLDNVVYRM…KAKKQVRIQD (62 aa)).

It belongs to the universal ribosomal protein uS4 family. Part of the 30S ribosomal subunit. Contacts protein S5. The interaction surface between S4 and S5 is involved in control of translational fidelity.

Functionally, one of the primary rRNA binding proteins, it binds directly to 16S rRNA where it nucleates assembly of the body of the 30S subunit. In terms of biological role, with S5 and S12 plays an important role in translational accuracy. This is Small ribosomal subunit protein uS4 from Thioalkalivibrio sulfidiphilus (strain HL-EbGR7).